The primary structure comprises 187 residues: Biphenyl 2,3-dioxygenase subunit beta (187 aa).

Belongs to the bacterial ring-hydroxylating dioxygenase beta subunit family. As to quaternary structure, heterohexamer consisting of three BphA1 subunits and three BphA2 subunits. The multicomponent biphenyl dioxygenase system is composed of a ferredoxin reductase (BphA4), a ferredoxin (BphA3), and a terminal oxygenase (BphA1A2).

The catalysed reaction is biphenyl + NADH + O2 + H(+) = (2R,3S)-3-phenylcyclohexa-3,5-diene-1,2-diol + NAD(+). The protein operates within xenobiotic degradation; biphenyl degradation; 2-hydroxy-2,4-pentadienoate and benzoate from biphenyl: step 1/4. In terms of biological role, part of the oxygenase component of the biphenyl dioxygenase system that catalyzes the stereospecific dihydroxylation of the aromatic ring of biphenyl, yielding a dihydrodiol compound. Is likely involved in biphenyl degradation that allows growth of Rhodococcus sp. strain RHA1 on biphenyl as the sole source of carbon and energy. Can also use naphtalene and 4-chlorobiphenyl (4-CB) as substrates, as well as some polychlorinated biphenyls (PCB) such as 2,2'-dichlorobiphenyl, 2,3-dichlorobiphenyl and 2,5,2'-trichlorobiphenyl. Exhibits weak activity toward dibenzofuran and dibenzo-p-dioxin. Electrons are transferred from NADH to the [2Fe-2S] cluster in BphA1 via FAD of BphA4 and [2Fe-2S] cluster of BphA3. In Rhodococcus jostii (strain RHA1), this protein is Biphenyl 2,3-dioxygenase subunit beta.